A 245-amino-acid polypeptide reads, in one-letter code: Sec-independent protein translocase protein TatC (245 aa).

Helical transmembrane passes span 17–37 (FISV…RSYI), 73–93 (FFAA…KFVA), 107–127 (FVSF…FVVV), 159–179 (VVVA…FAKI), 191–207 (FRIA…FMTP), and 210–230 (VLSQ…SILI).

This sequence belongs to the TatC family. In terms of assembly, the Tat system comprises two distinct complexes: a TatABC complex, containing multiple copies of TatA, TatB and TatC subunits, and a separate TatA complex, containing only TatA subunits. Substrates initially bind to the TatABC complex, which probably triggers association of the separate TatA complex to form the active translocon.

It is found in the cell inner membrane. Its function is as follows. Part of the twin-arginine translocation (Tat) system that transports large folded proteins containing a characteristic twin-arginine motif in their signal peptide across membranes. Together with TatB, TatC is part of a receptor directly interacting with Tat signal peptides. The chain is Sec-independent protein translocase protein TatC from Campylobacter jejuni subsp. jejuni serotype O:2 (strain ATCC 700819 / NCTC 11168).